Consider the following 235-residue polypeptide: Phosphoribosylaminoimidazole-succinocarboxamide synthase (235 aa).

The protein belongs to the SAICAR synthetase family.

The enzyme catalyses 5-amino-1-(5-phospho-D-ribosyl)imidazole-4-carboxylate + L-aspartate + ATP = (2S)-2-[5-amino-1-(5-phospho-beta-D-ribosyl)imidazole-4-carboxamido]succinate + ADP + phosphate + 2 H(+). The protein operates within purine metabolism; IMP biosynthesis via de novo pathway; 5-amino-1-(5-phospho-D-ribosyl)imidazole-4-carboxamide from 5-amino-1-(5-phospho-D-ribosyl)imidazole-4-carboxylate: step 1/2. In Clostridium perfringens (strain SM101 / Type A), this protein is Phosphoribosylaminoimidazole-succinocarboxamide synthase.